A 532-amino-acid polypeptide reads, in one-letter code: Phosphoenolpyruvate carboxykinase (ATP) (532 aa).

Substrate-binding residues include arginine 60, tyrosine 194, and lysine 200. ATP contacts are provided by residues lysine 200, histidine 219, and 237–245; that span reads GLSGTGKTT. Mn(2+) is bound by residues lysine 200 and histidine 219. Aspartate 258 is a binding site for Mn(2+). 3 residues coordinate ATP: glutamate 286, arginine 324, and threonine 449. Arginine 324 lines the substrate pocket.

Belongs to the phosphoenolpyruvate carboxykinase (ATP) family. Mn(2+) is required as a cofactor.

Its subcellular location is the cytoplasm. The enzyme catalyses oxaloacetate + ATP = phosphoenolpyruvate + ADP + CO2. Its pathway is carbohydrate biosynthesis; gluconeogenesis. In terms of biological role, involved in the gluconeogenesis. Catalyzes the conversion of oxaloacetate (OAA) to phosphoenolpyruvate (PEP) through direct phosphoryl transfer between the nucleoside triphosphate and OAA. The polypeptide is Phosphoenolpyruvate carboxykinase (ATP) (Ruegeria sp. (strain TM1040) (Silicibacter sp.)).